Reading from the N-terminus, the 664-residue chain is Xyloglucan-specific galacturonosyltransferase 1 (664 aa).

Positions 1–21 (MSLSKHLQKLVHKRESKKQPN) are enriched in basic residues. A disordered region spans residues 1–49 (MSLSKHLQKLVHKRESKKQPNKKMPVSVSKLRRPRTSKKTETGNPEKTL). The Cytoplasmic portion of the chain corresponds to 1-71 (MSLSKHLQKL…IFSARSFLYR (71 aa)). The chain crosses the membrane as a helical; Signal-anchor for type II membrane protein span at residues 72-92 (VPLTILFLFLIYLWSTSTTVI). Topologically, residues 93–664 (SGNVVHICIS…SLFKKIAKTV (572 aa)) are lumenal. 7 N-linked (GlcNAc...) asparagine glycosylation sites follow: Asn126, Asn158, Asn175, Asn181, Asn355, Asn379, and Asn522.

It belongs to the glycosyltransferase 47 family. Root hair specific. Expressed in roots and young leaves.

It is found in the golgi apparatus membrane. Xyloglucan-specific galacturonosyltransferase that forms the beta-D-galactosyluronic acid-(1-&gt;2)-alpha-D-xylosyl linkage. Required for root hair development probably by providing important acidic xyloglucans. This is Xyloglucan-specific galacturonosyltransferase 1 from Arabidopsis thaliana (Mouse-ear cress).